Consider the following 817-residue polypeptide: Lon protease (817 aa).

Residues 44–239 enclose the Lon N-terminal domain; sequence LPILPLRNTV…ETLRYMNVEL (196 aa). 390 to 397 serves as a coordination point for ATP; it reads GPPGVGKT. The region spanning 626–807 is the Lon proteolytic domain; it reads NDVAGVVTGL…SEVLAIALTD (182 aa). Active-site residues include Ser713 and Lys756.

Belongs to the peptidase S16 family. In terms of assembly, homohexamer. Organized in a ring with a central cavity.

It localises to the cytoplasm. It catalyses the reaction Hydrolysis of proteins in presence of ATP.. Its function is as follows. ATP-dependent serine protease that mediates the selective degradation of mutant and abnormal proteins as well as certain short-lived regulatory proteins. Required for cellular homeostasis and for survival from DNA damage and developmental changes induced by stress. Degrades polypeptides processively to yield small peptide fragments that are 5 to 10 amino acids long. Binds to DNA in a double-stranded, site-specific manner. This chain is Lon protease, found in Flavobacterium johnsoniae (strain ATCC 17061 / DSM 2064 / JCM 8514 / BCRC 14874 / CCUG 350202 / NBRC 14942 / NCIMB 11054 / UW101) (Cytophaga johnsonae).